Reading from the N-terminus, the 313-residue chain is UDP-N-acetylenolpyruvoylglucosamine reductase (313 aa).

The region spanning 31 to 207 (VGGPADALVA…TGVDLGLGFD (177 aa)) is the FAD-binding PCMH-type domain. Arg180 is a catalytic residue. Cys236 (proton donor) is an active-site residue. Residue Glu307 is part of the active site.

This sequence belongs to the MurB family. The cofactor is FAD.

The protein localises to the cytoplasm. It catalyses the reaction UDP-N-acetyl-alpha-D-muramate + NADP(+) = UDP-N-acetyl-3-O-(1-carboxyvinyl)-alpha-D-glucosamine + NADPH + H(+). The protein operates within cell wall biogenesis; peptidoglycan biosynthesis. In terms of biological role, cell wall formation. This chain is UDP-N-acetylenolpyruvoylglucosamine reductase, found in Desulfosudis oleivorans (strain DSM 6200 / JCM 39069 / Hxd3) (Desulfococcus oleovorans).